Reading from the N-terminus, the 313-residue chain is 3'-5' exoribonuclease YhaM (313 aa).

The 117-residue stretch at 163-279 folds into the HD domain; that stretch reads HVVSMLRLAK…LHQIDLMDAS (117 aa).

This sequence belongs to the YhaM family.

Its function is as follows. Shows a 3'-5' exoribonuclease activity. This Listeria monocytogenes serotype 4b (strain CLIP80459) protein is 3'-5' exoribonuclease YhaM.